Here is a 363-residue protein sequence, read N- to C-terminus: Large ribosomal subunit protein uL4B (363 aa).

Residues 280–363 (PENIISNADV…EKFLSVLHEN (84 aa)) are C-terminal-extended nuclear localization signal.

Belongs to the universal ribosomal protein uL4 family. As to quaternary structure, component of the large ribosomal subunit (LSU). Mature yeast ribosomes consist of a small (40S) and a large (60S) subunit. The 40S small subunit contains 1 molecule of ribosomal RNA (18S rRNA) and at least 33 different proteins. The large 60S subunit contains 3 rRNA molecules (25S, 5.8S and 5S rRNA) and at least 46 different proteins. uL4 is associated with the polypeptide exit tunnel. uL4 interacts with its chaperone ACL4 and the nuclear import receptor KAP104.

Its subcellular location is the cytoplasm. Component of the ribosome, a large ribonucleoprotein complex responsible for the synthesis of proteins in the cell. The small ribosomal subunit (SSU) binds messenger RNAs (mRNAs) and translates the encoded message by selecting cognate aminoacyl-transfer RNA (tRNA) molecules. The large subunit (LSU) contains the ribosomal catalytic site termed the peptidyl transferase center (PTC), which catalyzes the formation of peptide bonds, thereby polymerizing the amino acids delivered by tRNAs into a polypeptide chain. The nascent polypeptides leave the ribosome through a tunnel in the LSU and interact with protein factors that function in enzymatic processing, targeting, and the membrane insertion of nascent chains at the exit of the ribosomal tunnel. The polypeptide is Large ribosomal subunit protein uL4B (rpl401) (Schizosaccharomyces pombe (strain 972 / ATCC 24843) (Fission yeast)).